The primary structure comprises 156 residues: ATP synthase subunit b (156 aa).

A helical membrane pass occupies residues 5 to 27 (ITLIGQMITFAIFVGFTMKFVWP).

Belongs to the ATPase B chain family. As to quaternary structure, F-type ATPases have 2 components, F(1) - the catalytic core - and F(0) - the membrane proton channel. F(1) has five subunits: alpha(3), beta(3), gamma(1), delta(1), epsilon(1). F(0) has three main subunits: a(1), b(2) and c(10-14). The alpha and beta chains form an alternating ring which encloses part of the gamma chain. F(1) is attached to F(0) by a central stalk formed by the gamma and epsilon chains, while a peripheral stalk is formed by the delta and b chains.

The protein resides in the cell inner membrane. Its function is as follows. F(1)F(0) ATP synthase produces ATP from ADP in the presence of a proton or sodium gradient. F-type ATPases consist of two structural domains, F(1) containing the extramembraneous catalytic core and F(0) containing the membrane proton channel, linked together by a central stalk and a peripheral stalk. During catalysis, ATP synthesis in the catalytic domain of F(1) is coupled via a rotary mechanism of the central stalk subunits to proton translocation. In terms of biological role, component of the F(0) channel, it forms part of the peripheral stalk, linking F(1) to F(0). The protein is ATP synthase subunit b of Francisella tularensis subsp. tularensis (strain SCHU S4 / Schu 4).